The chain runs to 193 residues: Cerebellin-1 (193 aa).

An N-terminal signal peptide occupies residues 1 to 21 (MLGVVELLLLGAAWLAGPARG). N-linked (GlcNAc...) asparagine glycosylation occurs at Asn-23. Residues 34–38 (CLVVC) are essential for interaction with NRXN1 and linker of two C1q trimers into disulfide-linked hexamers. The C1q domain maps to 57 to 193 (SGSAKVAFSA…TFSGFLVFPL (137 aa)). A necessary for interaction with CBLN3, and homotrimerization region spans residues 62 to 193 (VAFSAIRSTN…TFSGFLVFPL (132 aa)). Asn-79 carries N-linked (GlcNAc...) asparagine glycosylation. An essential for interaction with GRID2 region spans residues 122–147 (YNRQTIQVSLMLNGWPVISAFAGDQD).

As to quaternary structure, homohexamer; disulfide-linked homotrimers. The trimers are assembled via the globular C1q domains. The trimers associate via N-terminal cysteine residues to form disulfide-linked hexamers. May form oligomers with CBLN2, CBLN3 and CBLN4 prior to secretion. Once secreted, does not interact with other CBLN family members. Interacts with GRID1. Interacts with NRXN1 and NRXN2 long (alpha) and short (beta) isoforms produced by alternative promoter usage. Competes with NLGN1 for NRXN1-binding. Weakly interacts with NRXN3 short isoform and not at all with NRXN3 long isoform. Interacts (via C1q domain) with GRID2; GRID2-binding is calcium-independent; CBLN1 hexamers anchor GRID2 N-terminal domain dimers to monomeric NRXN1 isoform beta; promotes synaptogenesis and mediates the D-Serine-dependent long term depression signals and AMPA receptor endocytosis. In terms of processing, the proteolytic processing to yield cerebellin seems to occur either prior to the secretion by presynaptic neurons and subsequent oligomerization or in some other location after release of the mature protein. Post-translationally, sialoglycoprotein.

It localises to the secreted. Its subcellular location is the postsynaptic cell membrane. Its function is as follows. Required for synapse integrity and synaptic plasticity. During cerebellar synapse formation, essential for the matching and maintenance of pre- and post-synaptic elements at parallel fiber-Purkinje cell synapses, the establishment of the proper pattern of climbing fiber-Purkinje cell innervation, and induction of long-term depression at parallel fiber-Purkinje cell synapses. Plays a role as a synaptic organizer that acts bidirectionally on both pre- and post-synaptic components. On the one hand induces accumulation of synaptic vesicles in the pre-synaptic part by binding with NRXN1 and in other hand induces clustering of GRID2 and its associated proteins at the post-synaptic site through association of GRID2. NRXN1-CBLN1-GRID2 complex directly induces parallel fiber protrusions that encapsulate spines of Purkinje cells leading to accumulation of GRID2 and synaptic vesicles. Required for CBLN3 export from the endoplasmic reticulum and secretion. NRXN1-CBLN1-GRID2 complex mediates the D-Serine-dependent long term depression signals and AMPA receptor endocytosis. Essential for long-term maintenance but not establishment of excitatory synapses. Inhibits the formation and function of inhibitory GABAergic synapses in cerebellar Purkinje cells. Functionally, the cerebellin peptide exerts neuromodulatory functions. Directly stimulates norepinephrine release via the adenylate cyclase/PKA-dependent signaling pathway; and indirectly enhances adrenocortical secretion in vivo, through a paracrine mechanism involving medullary catecholamine release. The polypeptide is Cerebellin-1 (Bos taurus (Bovine)).